An 83-amino-acid polypeptide reads, in one-letter code: NAD(P)H-quinone oxidoreductase subunit L (83 aa).

The next 2 helical transmembrane spans lie at 18–38 (IGGY…LLFF) and 53–73 (FSVY…APFL).

The protein belongs to the complex I NdhL subunit family. NDH-1 can be composed of about 15 different subunits; different subcomplexes with different compositions have been identified which probably have different functions.

Its subcellular location is the cellular thylakoid membrane. The catalysed reaction is a plastoquinone + NADH + (n+1) H(+)(in) = a plastoquinol + NAD(+) + n H(+)(out). It carries out the reaction a plastoquinone + NADPH + (n+1) H(+)(in) = a plastoquinol + NADP(+) + n H(+)(out). Its function is as follows. NDH-1 shuttles electrons from an unknown electron donor, via FMN and iron-sulfur (Fe-S) centers, to quinones in the respiratory and/or the photosynthetic chain. The immediate electron acceptor for the enzyme in this species is believed to be plastoquinone. Couples the redox reaction to proton translocation, and thus conserves the redox energy in a proton gradient. Cyanobacterial NDH-1 also plays a role in inorganic carbon-concentration. The sequence is that of NAD(P)H-quinone oxidoreductase subunit L from Synechococcus sp. (strain CC9311).